The sequence spans 336 residues: MAMRKLLSKKLFNITNVASQSLMNCRISSSSLAVRTRVPNDSTDTTKIAPEPGDLAMSRRFMHNSAMIRPAEIMQMPVGESLIEKLREIDGSKDRIRLDGLSPPERETSLTVADTKKLLRAAQIEIVKSKLRETGRSWMPYKEFVSVCGEASSDPDLGSKIAKMLDDSANVIVLGDSVCIRPDQVTKSIEGLLPLPKIHNPNDPRRIEFKELEAEKAVIDVKAHTLVRKELWAGLGYLILQTAGFMRLTFWELSWDVMEPICFYVTSVYFMAGYAFFLRTSKEPSFEGFYQSRFEAKQRKLMNEYEFDLERYNELKKLFCSKPSDHVSKILGAIKS.

The transit peptide at 1-69 directs the protein to the mitochondrion; it reads MAMRKLLSKK…RFMHNSAMIR (69 aa). A run of 2 helical transmembrane segments spans residues 231 to 251 and 257 to 277; these read LWAG…LTFW and VMEP…YAFF. The Selectivity filter motif lies at 255–263; that stretch reads WDVMEPICF. Ca(2+) is bound at residue E259.

The protein belongs to the MCU (TC 1.A.77) family.

It localises to the mitochondrion inner membrane. It catalyses the reaction Ca(2+)(in) = Ca(2+)(out). Mitochondrial inner membrane calcium uniporter that mediates calcium uptake into mitochondria. Constitutes a pore-forming and calcium-conducting subunit. Mitochondrial calcium homeostasis plays key roles in cellular physiology and regulates cell bioenergetics, cytoplasmic calcium signals and activation of cell death pathways. This is Calcium uniporter protein 3, mitochondrial from Arabidopsis thaliana (Mouse-ear cress).